Consider the following 174-residue polypeptide: Peptidyl-prolyl cis-trans isomerase-like 1 (174 aa).

In terms of domain architecture, PPIase cyclophilin-type spans 5–159 (SPTYVTFDTS…EEIKIHRARL (155 aa)).

Belongs to the cyclophilin-type PPIase family. PPIL1 subfamily.

It catalyses the reaction [protein]-peptidylproline (omega=180) = [protein]-peptidylproline (omega=0). Its function is as follows. PPIases accelerate the folding of proteins. It catalyzes the cis-trans isomerization of proline imidic peptide bonds in oligopeptides. The sequence is that of Peptidyl-prolyl cis-trans isomerase-like 1 (CYP1) from Cryptococcus neoformans var. neoformans serotype D (strain B-3501A) (Filobasidiella neoformans).